A 366-amino-acid polypeptide reads, in one-letter code: MQSKRYLVLEDGSFYEGYRLGSDNLTVGEIVFNTAMTGYQETISDPSYTGQIITFTYPLIGNYGINRDDFESLVPTLNGIVVKEASAHPSNFRQQKTLHDVLELHQIPGIAGVDTRSITRKIRQHGVLKAGFTDRKEDIDQLVKHLQQVELPKNEVEIVSTKTPYVSTGKDLSVVLVDFGKKQNIVRELNVRGCNVTVVPYTTTAEEILAMAPDGVMLSNGPGNPEVVECAIPMIQGILGKIPFFGICLGHQLFALSQGASSFKMKFGHRGANHPVKNLETGKVDITSQNHGYAIDIDSLKSTDLEVTHLALNDGTVEGLKHKTLPAFSVQYHPEANPGPSDSNYLFDDFVAMMTNFKEKERHINA.

Residues methionine 1–aspartate 171 are CPSase. L-glutamine is bound by residues serine 47, glycine 221, and glycine 223. Residues serine 173 to lysine 360 enclose the Glutamine amidotransferase type-1 domain. Cysteine 248 serves as the catalytic Nucleophile. L-glutamine is bound by residues leucine 249, glutamine 252, asparagine 290, glycine 292, and tyrosine 293. Residues histidine 333 and glutamate 335 contribute to the active site.

This sequence belongs to the CarA family. In terms of assembly, composed of two chains; the small (or glutamine) chain promotes the hydrolysis of glutamine to ammonia, which is used by the large (or ammonia) chain to synthesize carbamoyl phosphate. Tetramer of heterodimers (alpha,beta)4.

The enzyme catalyses hydrogencarbonate + L-glutamine + 2 ATP + H2O = carbamoyl phosphate + L-glutamate + 2 ADP + phosphate + 2 H(+). The catalysed reaction is L-glutamine + H2O = L-glutamate + NH4(+). It participates in amino-acid biosynthesis; L-arginine biosynthesis; carbamoyl phosphate from bicarbonate: step 1/1. The protein operates within pyrimidine metabolism; UMP biosynthesis via de novo pathway; (S)-dihydroorotate from bicarbonate: step 1/3. Small subunit of the glutamine-dependent carbamoyl phosphate synthetase (CPSase). CPSase catalyzes the formation of carbamoyl phosphate from the ammonia moiety of glutamine, carbonate, and phosphate donated by ATP, constituting the first step of 2 biosynthetic pathways, one leading to arginine and/or urea and the other to pyrimidine nucleotides. The small subunit (glutamine amidotransferase) binds and cleaves glutamine to supply the large subunit with the substrate ammonia. This is Carbamoyl phosphate synthase small chain from Staphylococcus aureus (strain COL).